The chain runs to 291 residues: 4-hydroxy-tetrahydrodipicolinate synthase (291 aa).

Threonine 45 provides a ligand contact to pyruvate. The Proton donor/acceptor role is filled by tyrosine 133. Lysine 161 serves as the catalytic Schiff-base intermediate with substrate. Pyruvate is bound at residue isoleucine 203.

This sequence belongs to the DapA family. As to quaternary structure, homotetramer; dimer of dimers.

It localises to the cytoplasm. It catalyses the reaction L-aspartate 4-semialdehyde + pyruvate = (2S,4S)-4-hydroxy-2,3,4,5-tetrahydrodipicolinate + H2O + H(+). It functions in the pathway amino-acid biosynthesis; L-lysine biosynthesis via DAP pathway; (S)-tetrahydrodipicolinate from L-aspartate: step 3/4. In terms of biological role, catalyzes the condensation of (S)-aspartate-beta-semialdehyde [(S)-ASA] and pyruvate to 4-hydroxy-tetrahydrodipicolinate (HTPA). The chain is 4-hydroxy-tetrahydrodipicolinate synthase from Neisseria meningitidis serogroup C / serotype 2a (strain ATCC 700532 / DSM 15464 / FAM18).